The sequence spans 715 residues: Fatty acid oxidation complex subunit alpha (715 aa).

The interval 1 to 190 (MIYEGKAITV…KVGAVDAVVA (190 aa)) is enoyl-CoA hydratase/isomerase. Aspartate 297 provides a ligand contact to substrate. Residues 312 to 715 (HDVKQAAVLG…MAKNGQRFFN (404 aa)) form a 3-hydroxyacyl-CoA dehydrogenase region. Residues methionine 325, aspartate 344, 401–403 (VVE), lysine 408, and serine 430 contribute to the NAD(+) site. The active-site For 3-hydroxyacyl-CoA dehydrogenase activity is the histidine 451. Asparagine 454 lines the NAD(+) pocket. Substrate is bound by residues asparagine 501 and tyrosine 660.

This sequence in the N-terminal section; belongs to the enoyl-CoA hydratase/isomerase family. It in the C-terminal section; belongs to the 3-hydroxyacyl-CoA dehydrogenase family. In terms of assembly, heterotetramer of two alpha chains (FadB) and two beta chains (FadA).

The catalysed reaction is a (3S)-3-hydroxyacyl-CoA + NAD(+) = a 3-oxoacyl-CoA + NADH + H(+). It carries out the reaction a (3S)-3-hydroxyacyl-CoA = a (2E)-enoyl-CoA + H2O. The enzyme catalyses a 4-saturated-(3S)-3-hydroxyacyl-CoA = a (3E)-enoyl-CoA + H2O. It catalyses the reaction (3S)-3-hydroxybutanoyl-CoA = (3R)-3-hydroxybutanoyl-CoA. The catalysed reaction is a (3Z)-enoyl-CoA = a 4-saturated (2E)-enoyl-CoA. It carries out the reaction a (3E)-enoyl-CoA = a 4-saturated (2E)-enoyl-CoA. Its pathway is lipid metabolism; fatty acid beta-oxidation. In terms of biological role, involved in the aerobic and anaerobic degradation of long-chain fatty acids via beta-oxidation cycle. Catalyzes the formation of 3-oxoacyl-CoA from enoyl-CoA via L-3-hydroxyacyl-CoA. It can also use D-3-hydroxyacyl-CoA and cis-3-enoyl-CoA as substrate. This is Fatty acid oxidation complex subunit alpha from Pseudomonas entomophila (strain L48).